A 556-amino-acid polypeptide reads, in one-letter code: Dihydroxy-acid dehydratase (556 aa).

A Mg(2+)-binding site is contributed by aspartate 78. Cysteine 119 contributes to the [2Fe-2S] cluster binding site. 2 residues coordinate Mg(2+): aspartate 120 and lysine 121. An N6-carboxylysine modification is found at lysine 121. Cysteine 191 is a binding site for [2Fe-2S] cluster. Residue glutamate 442 coordinates Mg(2+). The active-site Proton acceptor is serine 468.

This sequence belongs to the IlvD/Edd family. In terms of assembly, homodimer. Requires [2Fe-2S] cluster as cofactor. Mg(2+) serves as cofactor.

It carries out the reaction (2R)-2,3-dihydroxy-3-methylbutanoate = 3-methyl-2-oxobutanoate + H2O. The enzyme catalyses (2R,3R)-2,3-dihydroxy-3-methylpentanoate = (S)-3-methyl-2-oxopentanoate + H2O. It functions in the pathway amino-acid biosynthesis; L-isoleucine biosynthesis; L-isoleucine from 2-oxobutanoate: step 3/4. The protein operates within amino-acid biosynthesis; L-valine biosynthesis; L-valine from pyruvate: step 3/4. Functionally, functions in the biosynthesis of branched-chain amino acids. Catalyzes the dehydration of (2R,3R)-2,3-dihydroxy-3-methylpentanoate (2,3-dihydroxy-3-methylvalerate) into 2-oxo-3-methylpentanoate (2-oxo-3-methylvalerate) and of (2R)-2,3-dihydroxy-3-methylbutanoate (2,3-dihydroxyisovalerate) into 2-oxo-3-methylbutanoate (2-oxoisovalerate), the penultimate precursor to L-isoleucine and L-valine, respectively. In Clostridium beijerinckii (strain ATCC 51743 / NCIMB 8052) (Clostridium acetobutylicum), this protein is Dihydroxy-acid dehydratase.